The sequence spans 60 residues: UPF0434 protein Ent638_1436 (60 aa).

Belongs to the UPF0434 family.

The sequence is that of UPF0434 protein Ent638_1436 from Enterobacter sp. (strain 638).